Consider the following 1115-residue polypeptide: Disheveled-associated activator of morphogenesis 2 (1115 aa).

The region spanning 40–416 is the GBD/FH3 domain; that stretch reads GPIPNPEELN…QIVLQDERGV (377 aa). Residues 434-515 are a coiled coil; that stretch reads MLINENEVKQ…ELVARHNESS (82 aa). 2 disordered regions span residues 510–605 and 655–697; these read RHNE…SHPL and QEGP…SATG. The FH1 domain occupies 518–694; the sequence is PVSSPPPPGG…TEKASRSMVS (177 aa). Residues 540–583 are compositionally biased toward pro residues; sequence LPPPPPPLPFDSCPPPPAPPLPPGGPPIPPGAPPCFSSGPPPSH. Residues 595-1042 form the FH2 domain; it reads KKRIPQPSHP…DERRARMEFM (448 aa). The DAD domain occupies 1065–1095; the sequence is EESGEFDDLVSALRSGEVFDKDLSKFKRNRK.

It belongs to the formin homology family. Interacts with DVL3. Interacts with INF2. As to expression, in early embryogenesis, expression is confined to embryonic ectoderm. Highly dynamic expression in later stages of gastrulation. In early somite stages, detected in posterior node and persists until 9-10 somites have developed when expression is concentrated in the chordoneural hinge. During organogenesis, expressed in the CNS, PNS, liver primordia, limb buds and genital tubercle.

Its function is as follows. Key regulator of the Wnt signaling pathway, which is required for various processes during development, such as dorsal patterning, determination of left/right symmetry or myelination in the central nervous system. Acts downstream of Wnt ligands and upstream of beta-catenin (CTNNB1). Required for canonical Wnt signaling pathway during patterning in the dorsal spinal cord by promoting the aggregation of Disheveled (Dvl) complexes, thereby clustering and formation of Wnt receptor signalosomes and potentiating Wnt activity. During dorsal patterning of the spinal cord, inhibits oligodendrocytes differentiation via interaction with PIP5K1A. Also regulates non-canonical Wnt signaling pathway. Acts downstream of PITX2 in the developing gut and is required for left/right asymmetry within dorsal mesentery: affects mesenchymal condensation by lengthening cadherin-based junctions through WNT5A and non-canonical Wnt signaling, inducing polarized condensation in the left dorsal mesentery necessary to initiate gut rotation. Together with DAAM1, required for myocardial maturation and sarcomere assembly. Is a regulator of actin nucleation and elongation, filopodia formation and podocyte migration. In Mus musculus (Mouse), this protein is Disheveled-associated activator of morphogenesis 2.